The chain runs to 156 residues: Small ribosomal subunit protein uS7 (156 aa).

This sequence belongs to the universal ribosomal protein uS7 family. As to quaternary structure, part of the 30S ribosomal subunit. Contacts proteins S9 and S11.

Functionally, one of the primary rRNA binding proteins, it binds directly to 16S rRNA where it nucleates assembly of the head domain of the 30S subunit. Is located at the subunit interface close to the decoding center, probably blocks exit of the E-site tRNA. The sequence is that of Small ribosomal subunit protein uS7 from Streptococcus pneumoniae serotype 4 (strain ATCC BAA-334 / TIGR4).